Here is a 369-residue protein sequence, read N- to C-terminus: Quinolinate synthase (369 aa).

Iminosuccinate contacts are provided by His-47 and Ser-64. Cys-111 serves as a coordination point for [4Fe-4S] cluster. Iminosuccinate-binding positions include 142-144 and Ser-163; that span reads YVN. [4Fe-4S] cluster is bound at residue Cys-231. Iminosuccinate contacts are provided by residues 257-259 and Thr-274; that span reads HPE. Cys-321 lines the [4Fe-4S] cluster pocket.

The protein belongs to the quinolinate synthase family. Type 3 subfamily. The cofactor is [4Fe-4S] cluster.

Its subcellular location is the cytoplasm. It carries out the reaction iminosuccinate + dihydroxyacetone phosphate = quinolinate + phosphate + 2 H2O + H(+). The protein operates within cofactor biosynthesis; NAD(+) biosynthesis; quinolinate from iminoaspartate: step 1/1. Catalyzes the condensation of iminoaspartate with dihydroxyacetone phosphate to form quinolinate. The polypeptide is Quinolinate synthase (Bacillus licheniformis (strain ATCC 14580 / DSM 13 / JCM 2505 / CCUG 7422 / NBRC 12200 / NCIMB 9375 / NCTC 10341 / NRRL NRS-1264 / Gibson 46)).